The following is a 75-amino-acid chain: Protein TM_1420 (75 aa).

Cys-6, Cys-11, Cys-39, and Cys-43 together coordinate [2Fe-2S] cluster.

It depends on [2Fe-2S] cluster as a cofactor.

In terms of biological role, might be part of a multi-protein complex, possibly involved in metal cluster assembly. This Thermotoga maritima (strain ATCC 43589 / DSM 3109 / JCM 10099 / NBRC 100826 / MSB8) protein is Protein TM_1420.